The sequence spans 196 residues: ATP-dependent Clp protease proteolytic subunit (196 aa).

Ser96 functions as the Nucleophile in the catalytic mechanism. His121 is a catalytic residue.

It belongs to the peptidase S14 family. In terms of assembly, fourteen ClpP subunits assemble into 2 heptameric rings which stack back to back to give a disk-like structure with a central cavity, resembling the structure of eukaryotic proteasomes.

The protein localises to the cytoplasm. The catalysed reaction is Hydrolysis of proteins to small peptides in the presence of ATP and magnesium. alpha-casein is the usual test substrate. In the absence of ATP, only oligopeptides shorter than five residues are hydrolyzed (such as succinyl-Leu-Tyr-|-NHMec, and Leu-Tyr-Leu-|-Tyr-Trp, in which cleavage of the -Tyr-|-Leu- and -Tyr-|-Trp bonds also occurs).. Cleaves peptides in various proteins in a process that requires ATP hydrolysis. Has a chymotrypsin-like activity. Plays a major role in the degradation of misfolded proteins. This chain is ATP-dependent Clp protease proteolytic subunit, found in Streptococcus equi subsp. zooepidemicus (strain H70).